The chain runs to 316 residues: Apolipoprotein E (316 aa).

Residues 1–18 (MKVLWVALVITLLAGCQA) form the signal peptide. 8 consecutive repeat copies span residues 79–100 (VLMD…GQLA), 101–122 (PIAQ…ARLA), 123–144 (SDME…AMMG), 145–166 (QTTD…KRLL), 167–188 (RDAE…EGSE), 189–210 (RSVS…ARAA), 211–232 (TVGT…QKLR), and 233–254 (GRVE…EQLE). The 8 X 22 AA approximate tandem repeats stretch occupies residues 79–254 (VLMDETMKEV…HLEEMREQLE (176 aa)). Methionine 142 bears the Methionine sulfoxide mark. The LDL and other lipoprotein receptors binding stretch occupies residues 157 to 167 (HLRKLRKRLLR). 161-164 (LRKR) is a binding site for heparin. Residues 209–289 (AATVGTLASQ…SWFEPLVEDM (81 aa)) form a lipid-binding and lipoprotein association region. 228 to 235 (HQKLRGRV) serves as a coordination point for heparin. The tract at residues 265-316 (SQMRLQAEAFQARLKSWFEPLVEDMQRQWAGLVEKVQLAMATSSTSAPSENH) is homooligomerization. The tract at residues 277–289 (RLKSWFEPLVEDM) is specificity for association with VLDL.

The protein belongs to the apolipoprotein A1/A4/E family. In terms of assembly, homotetramer. May interact with ABCA1; functionally associated with ABCA1 in the biogenesis of HDLs. May interact with APP/A4 amyloid-beta peptide; the interaction is extremely stable in vitro but its physiological significance is unclear. May interact with MAPT. May interact with MAP2. In the cerebrospinal fluid, interacts with secreted SORL1. Interacts with PMEL; this allows the loading of PMEL luminal fragment on ILVs to induce fibril nucleation. Post-translationally, APOE exists as multiple glycosylated and sialylated glycoforms within cells and in plasma. The extent of glycosylation and sialylation are tissue and context specific. In terms of processing, glycated in plasma VLDL. Phosphorylated by FAM20C in the extracellular medium.

The protein resides in the secreted. Its subcellular location is the extracellular space. It is found in the extracellular matrix. The protein localises to the extracellular vesicle. It localises to the endosome. The protein resides in the multivesicular body. APOE is an apolipoprotein, a protein associating with lipid particles, that mainly functions in lipoprotein-mediated lipid transport between organs via the plasma and interstitial fluids. APOE is a core component of plasma lipoproteins and is involved in their production, conversion and clearance. Apolipoproteins are amphipathic molecules that interact both with lipids of the lipoprotein particle core and the aqueous environment of the plasma. As such, APOE associates with chylomicrons, chylomicron remnants, very low density lipoproteins (VLDL) and intermediate density lipoproteins (IDL) but shows a preferential binding to high-density lipoproteins (HDL). It also binds a wide range of cellular receptors including the LDL receptor/LDLR and the very low-density lipoprotein receptor/VLDLR that mediate the cellular uptake of the APOE-containing lipoprotein particles. Finally, APOE also has a heparin-binding activity and binds heparan-sulfate proteoglycans on the surface of cells, a property that supports the capture and the receptor-mediated uptake of APOE-containing lipoproteins by cells. This is Apolipoprotein E (APOE) from Lipotes vexillifer (Yangtze river dolphin).